A 244-amino-acid polypeptide reads, in one-letter code: Putative B3 domain-containing protein At2g31460 (244 aa).

Residues 49–147 constitute a DNA-binding region (TF-B3); the sequence is SSMHMENSGF…PVHDGVNLSG (99 aa). 2 disordered regions span residues 175-196 and 217-244; these read DGNL…QDSV and DSQG…GHYQ. A compositionally biased stretch (basic and acidic residues) spans 235 to 244; sequence GSIRDSGHYQ.

Its subcellular location is the nucleus. This Arabidopsis thaliana (Mouse-ear cress) protein is Putative B3 domain-containing protein At2g31460.